The primary structure comprises 618 residues: 1-deoxy-D-xylulose-5-phosphate synthase (618 aa).

Thiamine diphosphate is bound by residues His75 and 116–118 (GHS). Asp147 lines the Mg(2+) pocket. Residues 148–149 (GA), Asn176, Tyr283, and Glu364 each bind thiamine diphosphate. Asn176 lines the Mg(2+) pocket.

Belongs to the transketolase family. DXPS subfamily. As to quaternary structure, homodimer. Requires Mg(2+) as cofactor. The cofactor is thiamine diphosphate.

It carries out the reaction D-glyceraldehyde 3-phosphate + pyruvate + H(+) = 1-deoxy-D-xylulose 5-phosphate + CO2. The protein operates within metabolic intermediate biosynthesis; 1-deoxy-D-xylulose 5-phosphate biosynthesis; 1-deoxy-D-xylulose 5-phosphate from D-glyceraldehyde 3-phosphate and pyruvate: step 1/1. In terms of biological role, catalyzes the acyloin condensation reaction between C atoms 2 and 3 of pyruvate and glyceraldehyde 3-phosphate to yield 1-deoxy-D-xylulose-5-phosphate (DXP). The protein is 1-deoxy-D-xylulose-5-phosphate synthase of Thiobacillus denitrificans (strain ATCC 25259 / T1).